Here is a 505-residue protein sequence, read N- to C-terminus: Protein DETOXIFICATION 50 (505 aa).

A run of 12 helical transmembrane segments spans residues Leu46 to Gly66, Ala78 to Glu98, Ile121 to Ile141, Ala155 to Leu175, Ile194 to Ile214, Leu219 to Phe239, Ile275 to Leu295, Gly305 to Val325, Ala344 to Val364, Ile380 to Pro400, Ala424 to Phe444, and Gly446 to Thr466.

It belongs to the multi antimicrobial extrusion (MATE) (TC 2.A.66.1) family. As to expression, preferentially expressed in rosette leaves. Detected mainly in the vascular tissues and guard cells. Mostly detected at reproductive stages in young anthers, in mature pollens and during pollen germination on the pistil. Also expressed in developing seeds.

It is found in the cell membrane. The protein resides in the late endosome membrane. Functions as a multidrug and toxin extrusion transporter in the export of abscisic acid (ABA) in guard cells. Plays a role in ABA-mediated growth inhibition and responses to drought conditions. May act as a negative regulator of hypocotyl cell elongation in the light. This chain is Protein DETOXIFICATION 50, found in Arabidopsis thaliana (Mouse-ear cress).